Reading from the N-terminus, the 237-residue chain is MQMDIIQKLENGLIVSCQALEGEPLHSPFIMAKMAKAAEIGGAVAIRANGYEDIVAIKKEVSIPVIGLIKKRYEGYAPYITPTMEEVDKVIEAGADIVAIDATKAYKPGGLTTGEFLKRIKEKYPKILVMADISTYEEGIEAEKLGFDLISTTLSGYTEYSPELEGPDYELIERLARKVNVPIIAEGRIWTPEEAVKALEKGAYAVVVGTAITRPHEITRRFVTFIKERRYSNVRAK.

The protein belongs to the NanE family.

It carries out the reaction an N-acyl-D-glucosamine 6-phosphate = an N-acyl-D-mannosamine 6-phosphate. The protein operates within amino-sugar metabolism; N-acetylneuraminate degradation; D-fructose 6-phosphate from N-acetylneuraminate: step 3/5. Functionally, converts N-acetylmannosamine-6-phosphate (ManNAc-6-P) to N-acetylglucosamine-6-phosphate (GlcNAc-6-P). This is Putative N-acetylmannosamine-6-phosphate 2-epimerase from Caldanaerobacter subterraneus subsp. tengcongensis (strain DSM 15242 / JCM 11007 / NBRC 100824 / MB4) (Thermoanaerobacter tengcongensis).